A 577-amino-acid polypeptide reads, in one-letter code: Heavy metal-associated isoprenylated plant protein 34 (577 aa).

In terms of domain architecture, HMA spans leucine 9–glutamate 72. A metal cation is bound by residues cysteine 20 and cysteine 23. Over residues glycine 77–glycine 87 the composition is skewed to gly residues. Disordered stretches follow at residues glycine 77–glutamine 136 and alanine 150–glycine 451. The span at asparagine 97–proline 106 shows a compositional bias: low complexity. Positions lysine 118 to histidine 129 are enriched in gly residues. A compositionally biased stretch (basic and acidic residues) spans lysine 168–alanine 177. Over residues aspartate 178–glutamate 213 the composition is skewed to acidic residues. Positions histidine 227–glycine 244 are enriched in low complexity. Gly residues-rich tracts occupy residues glycine 245–lysine 254 and phenylalanine 266–phenylalanine 281. 2 stretches are compositionally biased toward basic and acidic residues: residues lysine 294–alanine 326 and asparagine 344–glycine 358. Composition is skewed to gly residues over residues lysine 379–glycine 392 and glycine 420–glycine 451. A Cysteine methyl ester modification is found at cysteine 574. Residue cysteine 574 is the site of S-farnesyl cysteine attachment. Residues serine 575–methionine 577 constitute a propeptide, removed in mature form.

The protein belongs to the HIPP family.

Heavy-metal-binding protein. This is Heavy metal-associated isoprenylated plant protein 34 from Arabidopsis thaliana (Mouse-ear cress).